Reading from the N-terminus, the 561-residue chain is Urocanate hydratase (561 aa).

Residues 52–53 (GG), Gln130, 176–178 (GMG), Glu196, Arg201, 242–243 (NA), 263–267 (QTSAH), 273–274 (YL), and Tyr322 contribute to the NAD(+) site. Cys410 is an active-site residue. Position 492 (Gly492) interacts with NAD(+).

This sequence belongs to the urocanase family. It depends on NAD(+) as a cofactor.

The protein localises to the cytoplasm. It catalyses the reaction 4-imidazolone-5-propanoate = trans-urocanate + H2O. It participates in amino-acid degradation; L-histidine degradation into L-glutamate; N-formimidoyl-L-glutamate from L-histidine: step 2/3. Catalyzes the conversion of urocanate to 4-imidazolone-5-propionate. This chain is Urocanate hydratase, found in Salmonella choleraesuis (strain SC-B67).